Reading from the N-terminus, the 420-residue chain is MTTNLQEMGKQAKQAAFVLAQLSQQQKNQALEIIAQQLEAQSDKILAENQKDIALAKQNGLSDAIIDRLLLTPSRLNDIANDVHHVISLADPVGQLIDGGILDSGLKIERVRVPLGVIGTIYEARPNVTIDVASLCLKTGNAVILRGGKETQYSNKILVDVVQHALVQAGLPKYAIQAITDPDRHLVMELLKLDRYVDMIIPRGGASLHELCKQHSTIPVIVGGIGVCHLFIEQSADLDKALPLIENAKTQRPSTCNTLETLLVQRAIATQFLPKLAQHLSAKHVKFHADPTALAILQSVQADVEPVQAHQLRQEWLSYDLNVVIVDDIEQAIAHIREYGSQHSDGILTGSQRLAQQFVAQVDSAAVYVNASTRFTDGGQFGLGAEVAVSTQKLHARGPMGLEALTTYKWVCVGDYCVRS.

The protein belongs to the gamma-glutamyl phosphate reductase family.

The protein resides in the cytoplasm. The catalysed reaction is L-glutamate 5-semialdehyde + phosphate + NADP(+) = L-glutamyl 5-phosphate + NADPH + H(+). Its pathway is amino-acid biosynthesis; L-proline biosynthesis; L-glutamate 5-semialdehyde from L-glutamate: step 2/2. In terms of biological role, catalyzes the NADPH-dependent reduction of L-glutamate 5-phosphate into L-glutamate 5-semialdehyde and phosphate. The product spontaneously undergoes cyclization to form 1-pyrroline-5-carboxylate. The protein is Gamma-glutamyl phosphate reductase of Pasteurella multocida (strain Pm70).